The primary structure comprises 1329 residues: GRB10-interacting GYF protein 2 (1329 aa).

Disordered stretches follow at residues 109–184 (RGGG…AHFP) and 236–419 (NERW…RTTL). Composition is skewed to basic and acidic residues over residues 150–177 (GGRE…KDPD) and 251–271 (GWRE…ERSG). Over residues 293–302 (CLEDAEEETG) the composition is skewed to acidic residues. Residues 316-338 (RALEKAPKEPILEEAELDFRPLE) show a composition bias toward basic and acidic residues. The span at 339–351 (ENDEYAEKDDSET) shows a compositional bias: acidic residues. Positions 352 to 376 (EQTKDTDTNTRHESDRNEENCKSEE) are enriched in basic and acidic residues. Residues 377–397 (PSPVAVPFSAVVTPPKATTPA) show a composition bias toward low complexity. Positions 403 to 415 (HLEKAEDKERPSE) are enriched in basic and acidic residues. The region spanning 556-604 (AFKWFYKDPQGEIQGPFNNQEMSEWFQAGYFTMTLQVKRGCDEMFQPLG) is the GYF domain. The segment covering 720–732 (QNPSTQASCSPNM) has biased composition (polar residues). Disordered stretches follow at residues 720-740 (QNPS…PSTW), 781-1081 (LRAK…QNRA), 1122-1155 (EAAP…SKKV), 1236-1256 (AKQN…QQES), and 1279-1302 (QQQQ…MVRA). The span at 781 to 896 (LRAKREEEER…RREEEKRLEE (116 aa)) shows a compositional bias: basic and acidic residues. The segment covering 899-908 (AAAAAALLRQ) has biased composition (low complexity). Basic and acidic residues predominate over residues 909–928 (QQEEQKKREQEAQRQQELQR). Low complexity predominate over residues 929-951 (QRQQQQEALRRLQQQQQQQQLAQ). The span at 954 to 966 (LPSSSKWGQQSTT) shows a compositional bias: polar residues. Over residues 967-980 (ANSLSQSQNALSLA) the composition is skewed to low complexity. Positions 983 to 1001 (QKLEEERERQTREEQRRQQ) are enriched in basic and acidic residues. Residues 1002 to 1013 (QELQRVQQQQPQ) show a composition bias toward low complexity. A compositionally biased stretch (basic and acidic residues) spans 1035-1049 (IQREEAQQMKQRKDQ). Over residues 1068 to 1081 (HSTNTQQNRTQNRA) the composition is skewed to polar residues. Residues 1239-1254 (NDNQQKPQQGQQQKQQ) are compositionally biased toward low complexity.

The protein belongs to the GIGYF family. In terms of assembly, component of the 4EHP-GYF2 complex.

Functionally, key component of the 4EHP-GYF2 complex, a multiprotein complex that acts as a repressor of translation initiation. In association with EIF4E2, assists ribosome-associated quality control (RQC) by sequestering the mRNA cap, blocking ribosome initiation and decreasing the translational load on problematic messages. The chain is GRB10-interacting GYF protein 2 (gigyf2) from Danio rerio (Zebrafish).